Reading from the N-terminus, the 269-residue chain is Putative pyruvate, phosphate dikinase regulatory protein (269 aa).

147-154 (GVSRTSKT) contributes to the ADP binding site.

The protein belongs to the pyruvate, phosphate/water dikinase regulatory protein family. PDRP subfamily.

It catalyses the reaction N(tele)-phospho-L-histidyl/L-threonyl-[pyruvate, phosphate dikinase] + ADP = N(tele)-phospho-L-histidyl/O-phospho-L-threonyl-[pyruvate, phosphate dikinase] + AMP + H(+). The catalysed reaction is N(tele)-phospho-L-histidyl/O-phospho-L-threonyl-[pyruvate, phosphate dikinase] + phosphate + H(+) = N(tele)-phospho-L-histidyl/L-threonyl-[pyruvate, phosphate dikinase] + diphosphate. Bifunctional serine/threonine kinase and phosphorylase involved in the regulation of the pyruvate, phosphate dikinase (PPDK) by catalyzing its phosphorylation/dephosphorylation. The polypeptide is Putative pyruvate, phosphate dikinase regulatory protein (Geotalea uraniireducens (strain Rf4) (Geobacter uraniireducens)).